Reading from the N-terminus, the 175-residue chain is Ribulose bisphosphate carboxylase small subunit, chloroplastic (175 aa).

Residues 1–34 (MSFATTNKTIVPCATTKQIVRPRFLSNGTISKSR) constitute a chloroplast transit peptide.

Belongs to the RuBisCO small chain family. Heterohexadecamer of 8 large and 8 small subunits.

The protein resides in the plastid. The protein localises to the chloroplast. Functionally, ruBisCO catalyzes two reactions: the carboxylation of D-ribulose 1,5-bisphosphate, the primary event in carbon dioxide fixation, as well as the oxidative fragmentation of the pentose substrate. Both reactions occur simultaneously and in competition at the same active site. Although the small subunit is not catalytic it is essential for maximal activity. The chain is Ribulose bisphosphate carboxylase small subunit, chloroplastic from Batophora oerstedii (Green alga).